A 130-amino-acid polypeptide reads, in one-letter code: Albumin-1 E (130 aa).

The first 26 residues, 1-26 (MASVKLASLIVLFATLGMFLTKNVGA), serve as a signal peptide directing secretion. 3 disulfide bridges follow: cysteine 29–cysteine 46, cysteine 33–cysteine 48, and cysteine 41–cysteine 58. 2 propeptides span residues 64–69 (VFLKGN) and 123–130 (LLKSVSTA).

Post-translationally, the C-terminal glycine may be removed from PA1b.

Functionally, PA1b binds to basic 7S globulin (BG) and stimulates its phosphorylation activity. Involved in the signal transduction system to regulate the growth and differentiation as a hormone peptide. Toxic to various insects through binding to a high affinity binding site in the insect gut. In Pisum sativum (Garden pea), this protein is Albumin-1 E.